The chain runs to 262 residues: Mitochondrial calcium uniporter regulator 1 (262 aa).

The stretch at 138-175 (EKSEFSALRTQNEKVKIELQQLKKQLNDSIVKVRASNK) forms a coiled coil. A helical transmembrane segment spans residues 239–261 (TIKYLAGSVFTCLTIALGFYRLW).

This sequence belongs to the CCDC90 family.

It is found in the mitochondrion inner membrane. Its function is as follows. Key regulator of mitochondrial calcium uniporter (mcu) required for calcium entry into mitochondrion. The sequence is that of Mitochondrial calcium uniporter regulator 1 from Xenopus tropicalis (Western clawed frog).